The sequence spans 311 residues: DNA repair and recombination protein RadA (311 aa).

ATP is bound at residue 104 to 111 (GEFGSGKS).

This sequence belongs to the eukaryotic RecA-like protein family.

Involved in DNA repair and in homologous recombination. Binds and assemble on single-stranded DNA to form a nucleoprotein filament. Hydrolyzes ATP in a ssDNA-dependent manner and promotes DNA strand exchange between homologous DNA molecules. This chain is DNA repair and recombination protein RadA, found in Methanosphaera stadtmanae (strain ATCC 43021 / DSM 3091 / JCM 11832 / MCB-3).